Consider the following 460-residue polypeptide: Phosphomethylpyrimidine synthase (460 aa).

Residues Asn80, Met109, Tyr139, His175, 195-197 (SRG), 236-239 (DSLR), and Glu275 each bind substrate. His279 is a Zn(2+) binding site. Position 302 (Tyr302) interacts with substrate. A Zn(2+)-binding site is contributed by His343. Residues Cys423, Cys426, and Cys431 each contribute to the [4Fe-4S] cluster site.

It belongs to the ThiC family. It depends on [4Fe-4S] cluster as a cofactor.

The catalysed reaction is 5-amino-1-(5-phospho-beta-D-ribosyl)imidazole + S-adenosyl-L-methionine = 4-amino-2-methyl-5-(phosphooxymethyl)pyrimidine + CO + 5'-deoxyadenosine + formate + L-methionine + 3 H(+). The protein operates within cofactor biosynthesis; thiamine diphosphate biosynthesis. Its function is as follows. Catalyzes the synthesis of the hydroxymethylpyrimidine phosphate (HMP-P) moiety of thiamine from aminoimidazole ribotide (AIR) in a radical S-adenosyl-L-methionine (SAM)-dependent reaction. The sequence is that of Phosphomethylpyrimidine synthase from Rippkaea orientalis (strain PCC 8801 / RF-1) (Cyanothece sp. (strain PCC 8801)).